Here is a 151-residue protein sequence, read N- to C-terminus: Large ribosomal subunit protein uL15 (151 aa).

The tract at residues M1 to M58 is disordered. Positions K13–R24 are enriched in basic residues. Residues I26 to M38 show a composition bias toward gly residues.

Belongs to the universal ribosomal protein uL15 family. As to quaternary structure, part of the 50S ribosomal subunit.

Functionally, binds to the 23S rRNA. This chain is Large ribosomal subunit protein uL15, found in Prochlorococcus marinus (strain SARG / CCMP1375 / SS120).